Consider the following 78-residue polypeptide: Large ribosomal subunit protein bL28 (78 aa).

Belongs to the bacterial ribosomal protein bL28 family.

The sequence is that of Large ribosomal subunit protein bL28 from Nostoc sp. (strain PCC 7120 / SAG 25.82 / UTEX 2576).